A 375-amino-acid polypeptide reads, in one-letter code: Probable sugar phosphate/phosphate translocator At3g17430 (375 aa).

10 helical membrane-spanning segments follow: residues 9-29 (LVLT…VILY), 43-63 (LPIT…FLLI), 76-96 (FEIY…SLWF), 106-126 (VAFI…MAVV), 140-160 (MLLV…FNIV), 163-183 (VYQV…QVLL), 193-213 (ITSL…PWYV), 229-249 (WIFF…FLVI), 257-276 (IRVA…TVIF), and 280-302 (TITG…YNYI). The tract at residues 328–348 (EKKSSDKFNPNDSVEIPRVGG) is disordered.

The protein belongs to the TPT transporter family. TPT (TC 2.A.7.9) subfamily.

The protein resides in the membrane. In Arabidopsis thaliana (Mouse-ear cress), this protein is Probable sugar phosphate/phosphate translocator At3g17430.